Consider the following 242-residue polypeptide: MLANPLSQFLIKPIIPLEALGYNISITNSAVAMIFVSIAASMLLITAFVNSKLVPSRWQAFGEILYESNIKLVHSIIGPQGKKFFPLILTLFLFISLGNILGMVPHAFTFTSHIIVTFSLAMIVFTTTLVYGIYRHKLGFFSLFLPKNIPLWLAPIMVIIELCVFISKPISLSLRLTANMVAGHILLKIIAWSIVSLTWLFKPLPIALVIVLIGFELFISILQAYIFTILSCVYLRDVVNLH.

6 helical membrane passes run 29-49 (SAVA…TAFV), 84-104 (FFPL…LGMV), 114-134 (IIVT…YGIY), 140-160 (FFSL…MVII), 181-201 (VAGH…TWLF), and 206-226 (IALV…QAYI).

Belongs to the ATPase A chain family. F-type ATPases have 2 components, CF(1) - the catalytic core - and CF(0) - the membrane proton channel. CF(1) has five subunits: alpha(3), beta(3), gamma(1), delta(1), epsilon(1). CF(0) has three main subunits: a(1), b(2) and c(9-12). The alpha and beta chains form an alternating ring which encloses part of the gamma chain. CF(1) is attached to CF(0) by a central stalk formed by the gamma and epsilon chains, while a peripheral stalk is formed by the delta and b chains.

Its subcellular location is the cell inner membrane. Functionally, key component of the proton channel; it plays a direct role in the translocation of protons across the membrane. The sequence is that of ATP synthase subunit a from Orientia tsutsugamushi (strain Ikeda) (Rickettsia tsutsugamushi).